A 549-amino-acid polypeptide reads, in one-letter code: Oxygen-dependent choline dehydrogenase (549 aa).

4–33 contacts FAD; that stretch reads DYVIVGSGSAGSAIAYRLSEDGRYSVIVIE. H465 serves as the catalytic Proton acceptor. Positions 528–549 are disordered; the sequence is KTPLPRSNQEPWVNPRAAVSDR.

This sequence belongs to the GMC oxidoreductase family. FAD serves as cofactor.

It carries out the reaction choline + A = betaine aldehyde + AH2. The enzyme catalyses betaine aldehyde + NAD(+) + H2O = glycine betaine + NADH + 2 H(+). The protein operates within amine and polyamine biosynthesis; betaine biosynthesis via choline pathway; betaine aldehyde from choline (cytochrome c reductase route): step 1/1. Functionally, involved in the biosynthesis of the osmoprotectant glycine betaine. Catalyzes the oxidation of choline to betaine aldehyde and betaine aldehyde to glycine betaine at the same rate. The polypeptide is Oxygen-dependent choline dehydrogenase (Agrobacterium fabrum (strain C58 / ATCC 33970) (Agrobacterium tumefaciens (strain C58))).